Here is a 376-residue protein sequence, read N- to C-terminus: Putative aryl-alcohol dehydrogenase AAD14 (376 aa).

Tyrosine 76 serves as the catalytic Proton donor. Histidine 151 is a binding site for substrate. NADP(+) is bound at residue 236-246 (DVMGGGRFQSK).

This sequence belongs to the aldo/keto reductase family. Aldo/keto reductase 2 subfamily.

In Saccharomyces cerevisiae (strain ATCC 204508 / S288c) (Baker's yeast), this protein is Putative aryl-alcohol dehydrogenase AAD14 (AAD14).